We begin with the raw amino-acid sequence, 213 residues long: MGLTDTQQAILALIAERIETDGVPPSQTEIARAFGFKGVRAAQYHLEALEQAGAIRRVPGQARGIRLAGAAAHARAAPAEEPVRDDVLRLPVLGRVAAGLPIGADIGSDDFVVLDRVFFSPSPDYLLKVQGDSMRDEGIFNGDLIGVHRTRDARSGQIVVARIDEEITVKLLKIGKDRIRLLPRNPDYAPIEVLPDQDFAIEGLYCGLLRPNR.

A DNA-binding region (H-T-H motif) is located at residues 27–47; sequence QTEIARAFGFKGVRAAQYHLE. Catalysis depends on for autocatalytic cleavage activity residues Ser-133 and Lys-170.

Belongs to the peptidase S24 family. Homodimer.

It catalyses the reaction Hydrolysis of Ala-|-Gly bond in repressor LexA.. In terms of biological role, represses a number of genes involved in the response to DNA damage (SOS response), including recA and lexA. In the presence of single-stranded DNA, RecA interacts with LexA causing an autocatalytic cleavage which disrupts the DNA-binding part of LexA, leading to derepression of the SOS regulon and eventually DNA repair. In Xanthomonas campestris pv. campestris (strain ATCC 33913 / DSM 3586 / NCPPB 528 / LMG 568 / P 25), this protein is LexA repressor 2.